A 455-amino-acid chain; its full sequence is Venom prothrombin activator hopsarin-D (455 aa).

Residues 1–20 (MAPQLLLCLILTFLWSVPEA) form the signal peptide. A propeptide spanning residues 21-40 (ESNVFLKSKVANRFLQRTKR) is cleaved from the precursor. The region spanning 41-86 (SNSLFEEIRPGNIERECIEEKCSKEEAREVFEDNEKTETFWNVYVD) is the Gla domain. Residues Glu-46, Glu-47, Glu-54, Glu-56, Glu-59, Glu-60, Glu-65, Glu-66, Glu-69, Glu-72, and Glu-75 each carry the 4-carboxyglutamate modification. Cysteines 57 and 62 form a disulfide. The EGF-like 1; calcium-binding domain occupies 86–121 (DGDQCSSNPCHYHGTCKDGIGSYTCTCLPNYEGKNC). Disulfide bonds link Cys-90/Cys-101, Cys-95/Cys-110, Cys-112/Cys-121, Cys-129/Cys-140, Cys-136/Cys-149, Cys-151/Cys-164, Cys-172/Cys-328, Cys-236/Cys-252, Cys-376/Cys-390, and Cys-401/Cys-429. O-linked (Hex...) serine glycosylation is present at Ser-92. An EGF-like 2 domain is found at 129-164 (CRAFNGNCWHFCKRVQSETQCSCAESYRLGVDGHSC). The propeptide at 182-209 (REASLPDFVQSQKATLLKKSDNPSPDIR) is activation peptide. Positions 210 to 453 (IVNGMDSKLG…FIPWIKKIMS (244 aa)) constitute a Peptidase S1 domain. Residue His-251 is the Charge relay system of the active site. Asn-254 carries N-linked (GlcNAc...) asparagine glycosylation. The Charge relay system role is filled by Asp-308. Residue Ser-405 is the Charge relay system of the active site.

The protein belongs to the peptidase S1 family. Snake venom subfamily. In terms of assembly, heterodimer of a light chain and a heavy chain; disulfide-linked. The vitamin K-dependent, enzymatic carboxylation of some glutamate residues allows the modified protein to bind calcium. In terms of tissue distribution, expressed by the venom gland.

The protein resides in the secreted. The enzyme catalyses Selective cleavage of Arg-|-Thr and then Arg-|-Ile bonds in prothrombin to form thrombin.. Its function is as follows. Snake prothrombin activator that attacks the hemostatic system of prey. This protein is functionally similar to blood coagulation factor Xa. The procoagulant activity of hopsarin-D is approximately 10-fold lower than that of trocarin-D and FXa. This is Venom prothrombin activator hopsarin-D from Hoplocephalus stephensii (Stephens's banded snake).